Here is a 376-residue protein sequence, read N- to C-terminus: tRNA-specific 2-thiouridylase MnmA (376 aa).

Residues 16-23 (AMSGGVDS) and Leu42 each bind ATP. Catalysis depends on Cys111, which acts as the Nucleophile. A disulfide bridge links Cys111 with Cys210. Gly135 provides a ligand contact to ATP. An interaction with tRNA region spans residues 158–160 (KDQ). Cys210 (cysteine persulfide intermediate) is an active-site residue.

Belongs to the MnmA/TRMU family.

The protein localises to the cytoplasm. It carries out the reaction S-sulfanyl-L-cysteinyl-[protein] + uridine(34) in tRNA + AH2 + ATP = 2-thiouridine(34) in tRNA + L-cysteinyl-[protein] + A + AMP + diphosphate + H(+). Its function is as follows. Catalyzes the 2-thiolation of uridine at the wobble position (U34) of tRNA, leading to the formation of s(2)U34. This chain is tRNA-specific 2-thiouridylase MnmA, found in Streptomyces avermitilis (strain ATCC 31267 / DSM 46492 / JCM 5070 / NBRC 14893 / NCIMB 12804 / NRRL 8165 / MA-4680).